Consider the following 158-residue polypeptide: NAD(P)H-quinone oxidoreductase subunit J, chloroplastic (158 aa).

Belongs to the complex I 30 kDa subunit family. In terms of assembly, NDH is composed of at least 16 different subunits, 5 of which are encoded in the nucleus.

It localises to the plastid. It is found in the chloroplast thylakoid membrane. The catalysed reaction is a plastoquinone + NADH + (n+1) H(+)(in) = a plastoquinol + NAD(+) + n H(+)(out). The enzyme catalyses a plastoquinone + NADPH + (n+1) H(+)(in) = a plastoquinol + NADP(+) + n H(+)(out). Functionally, NDH shuttles electrons from NAD(P)H:plastoquinone, via FMN and iron-sulfur (Fe-S) centers, to quinones in the photosynthetic chain and possibly in a chloroplast respiratory chain. The immediate electron acceptor for the enzyme in this species is believed to be plastoquinone. Couples the redox reaction to proton translocation, and thus conserves the redox energy in a proton gradient. The protein is NAD(P)H-quinone oxidoreductase subunit J, chloroplastic of Nicotiana tabacum (Common tobacco).